The following is a 285-amino-acid chain: 4-hydroxybenzoate octaprenyltransferase (285 aa).

9 consecutive transmembrane segments (helical) span residues 19 to 39, 42 to 62, 82 to 102, 104 to 124, 136 to 156, 166 to 186, 210 to 230, 233 to 253, and 265 to 285; these read IGSL…ADGL, WHVL…GCVI, LPSG…LVVC, FLLV…GIVL, YLPQ…AYAA, WLLF…YAMV, IIGL…SQLA, GIYY…QWLI, and FLNN…SVLI.

The protein belongs to the UbiA prenyltransferase family. It depends on Mg(2+) as a cofactor.

It is found in the cell inner membrane. The catalysed reaction is all-trans-octaprenyl diphosphate + 4-hydroxybenzoate = 4-hydroxy-3-(all-trans-octaprenyl)benzoate + diphosphate. It participates in cofactor biosynthesis; ubiquinone biosynthesis. Its function is as follows. Catalyzes the prenylation of para-hydroxybenzoate (PHB) with an all-trans polyprenyl group. Mediates the second step in the final reaction sequence of ubiquinone-8 (UQ-8) biosynthesis, which is the condensation of the polyisoprenoid side chain with PHB, generating the first membrane-bound Q intermediate 3-octaprenyl-4-hydroxybenzoate. This Aliivibrio fischeri (strain ATCC 700601 / ES114) (Vibrio fischeri) protein is 4-hydroxybenzoate octaprenyltransferase.